We begin with the raw amino-acid sequence, 898 residues long: Sodium/hydrogen exchanger 5 (898 aa).

Residues 1–3 (MLR) are Cytoplasmic-facing. A helical transmembrane segment spans residues 4–24 (VALLLLPGLPLAGVGATEEPT). The Extracellular segment spans residues 25-47 (QEPGPLGEPPGLALFRWQWHEVE). Residues 48-68 (APYLVALWILVASLAKIVFHL) traverse the membrane as a helical segment. The Cytoplasmic portion of the chain corresponds to 69 to 75 (SRKVTSL). Residues 76 to 96 (VPESCLLILLGLALGGIVLAV) traverse the membrane as a helical segment. Over 97 to 136 (AKKAEYQLEPGTFFLFLLPPIVLDSGYFMPSRLFFDNLGA) the chain is Extracellular. The chain crosses the membrane as a helical span at residues 137-157 (ILTYAVVGTLWNAFTTGVALW). The Cytoplasmic portion of the chain corresponds to 158 to 175 (GLQQAGLVAPRVQAGLLD). The helical transmembrane segment at 176-196 (FLLFGSLISAVDPVAVLAVFE) threads the bilayer. The Extracellular segment spans residues 197–202 (EVHVNE). Residue Asn201 is glycosylated (N-linked (GlcNAc...) asparagine). The chain crosses the membrane as a helical span at residues 203-223 (TLFIIVFGESLLNDAVTVVLY). Residues 224-248 (KVCNSFVEMGSANVQATDYLKGVAS) are Cytoplasmic-facing. A helical transmembrane segment spans residues 249 to 269 (LFVVSLGGAAVGLVFAFLLAL). Topologically, residues 270–278 (TTRFTKRVR) are extracellular. A helical membrane pass occupies residues 279-299 (IIEPLLVFLLAYAAYLTAEMA). Topologically, residues 300–333 (SLSAILAVTMCGLGCKKYVEANISHKSRTAVKYT) are cytoplasmic. Residues 334–354 (MKTLASSAETVIFMLLGISAV) traverse the membrane as a helical segment. The Extracellular segment spans residues 355–362 (DSSKWAWD). Residues 363 to 383 (SGLVLGTLFFILFFRALGVVL) form a helical membrane-spanning segment. The Cytoplasmic segment spans residues 384–400 (QTWVLNQFRLVPLDKID). Residues 401–421 (QVVMSYGGLRGAVAFALVILL) traverse the membrane as a helical segment. Topologically, residues 422–430 (DRTKVPAKD) are extracellular. The helical transmembrane segment at 431–451 (YFVATTIVVVFFTVIVQGLTI) threads the bilayer. The Cytoplasmic segment spans residues 452 to 898 (KPLVKWLRVK…CIQFNRGGRL (447 aa)). Disordered stretches follow at residues 660–692 (TKSK…RDLG) and 801–888 (ESLA…NSHW). Residues 662–674 (SKPRPRKTGHKKK) show a composition bias toward basic residues. Polar residues predominate over residues 856-867 (ESSADIPQQQEL).

Belongs to the monovalent cation:proton antiporter 1 (CPA1) transporter (TC 2.A.36) family. In terms of assembly, interacts with CHP1 and CHP2. Interacts with ARRB2; facilitates the endocytosis of SLC9A5 from the plasma membrane. Interacts with RACK1; this interaction positively regulates SLC9A5 activity and promotes SLC9A5 localization to focal adhesions. Interacts with SCAMP2; this interaction regulates SLC9A5 cell-surface targeting and SLC9A5 activity. In terms of processing, phosphorylated by PRKAA2; promotes its accumulation at the cell surface. Phosphorylated by CSNK2A1 in a manner favoring its beta-arrestin binding and endocytosis. As to expression, highly expressed in brain. Strongly expressed in the dentate gyrus.

Its subcellular location is the cell membrane. The protein localises to the recycling endosome membrane. It localises to the cell projection. It is found in the dendritic spine membrane. The protein resides in the synaptic cell membrane. Its subcellular location is the cell junction. The protein localises to the focal adhesion. The catalysed reaction is Na(+)(in) + H(+)(out) = Na(+)(out) + H(+)(in). Its function is as follows. Plasma membrane Na(+)/H(+) antiporter. Mediates the electroneutral exchange of intracellular H(+) ions for extracellular Na(+) in 1:1 stoichiometry. Responsible for regulating intracellular pH homeostasis, in particular in neural tissues. Acts as a negative regulator of dendritic spine growth. Plays a role in postsynaptic remodeling and signaling. Can also contribute to organellar pH regulation, with consequences for receptor tyrosine kinase trafficking. The chain is Sodium/hydrogen exchanger 5 (Slc9a5) from Rattus norvegicus (Rat).